Here is a 492-residue protein sequence, read N- to C-terminus: Adenylyltransferase and sulfurtransferase uba4 (492 aa).

Residues Gly-99, Asp-120, Ser-127 to Arg-131, Lys-144, and Asp-188 to Asn-189 contribute to the ATP site. Zn(2+)-binding residues include Cys-237 and Cys-240. The active-site Glycyl thioester intermediate; for adenylyltransferase activity is the Cys-254. Zn(2+) contacts are provided by Cys-317 and Cys-320. In terms of domain architecture, Rhodanese spans Gly-378–Pro-490. Cys-445 serves as the catalytic Cysteine persulfide intermediate; for sulfurtransferase activity.

In the N-terminal section; belongs to the HesA/MoeB/ThiF family. UBA4 subfamily. It depends on Zn(2+) as a cofactor.

It is found in the cytoplasm. The protein resides in the cytosol. It catalyses the reaction [molybdopterin-synthase sulfur-carrier protein]-C-terminal Gly-Gly + ATP + H(+) = [molybdopterin-synthase sulfur-carrier protein]-C-terminal Gly-Gly-AMP + diphosphate. The enzyme catalyses [molybdopterin-synthase sulfur-carrier protein]-C-terminal Gly-Gly-AMP + S-sulfanyl-L-cysteinyl-[cysteine desulfurase] + AH2 = [molybdopterin-synthase sulfur-carrier protein]-C-terminal-Gly-aminoethanethioate + L-cysteinyl-[cysteine desulfurase] + A + AMP + 2 H(+). Its pathway is tRNA modification; 5-methoxycarbonylmethyl-2-thiouridine-tRNA biosynthesis. It functions in the pathway cofactor biosynthesis; molybdopterin biosynthesis. In terms of biological role, plays a central role in 2-thiolation of mcm(5)S(2)U at tRNA wobble positions of cytosolic tRNA(Lys), tRNA(Glu) and tRNA(Gln). Also essential during biosynthesis of the molybdenum cofactor. Acts by mediating the C-terminal thiocarboxylation of sulfur carriers urm1 and mocs2a. Its N-terminus first activates urm1 and mocs2a as acyl-adenylates (-COAMP), then the persulfide sulfur on the catalytic cysteine is transferred to urm1 and mocs2a to form thiocarboxylation (-COSH) of their C-terminus. The reaction probably involves hydrogen sulfide that is generated from the persulfide intermediate and that acts as a nucleophile towards urm1 and mocs2a. Subsequently, a transient disulfide bond is formed. Does not use thiosulfate as sulfur donor; nfs1 probably acting as a sulfur donor for thiocarboxylation reactions. This chain is Adenylyltransferase and sulfurtransferase uba4, found in Aspergillus clavatus (strain ATCC 1007 / CBS 513.65 / DSM 816 / NCTC 3887 / NRRL 1 / QM 1276 / 107).